A 1356-amino-acid chain; its full sequence is Vascular endothelial growth factor receptor 2 (1356 aa).

Positions 1-19 (MQSKVLLAVALWLCVETRA) are cleaved as a signal peptide. Residues 20–764 (ASVGLPSVSL…EGAQEKTNLE (745 aa)) lie on the Extracellular side of the membrane. Residues N46, N66, N96, N143, N158, and N245 are each glycosylated (N-linked (GlcNAc...) asparagine). 7 consecutive Ig-like C2-type domains span residues 46 to 110 (NTTL…ETDL), 141 to 207 (NKNK…INDE), 224 to 320 (YDVV…KNST), 328 to 414 (PFVA…HVVS), 421 to 548 (PQIG…FHVT), 551 to 660 (PEIT…RQLT), and 667 to 753 (PTIT…AFFI). C53 and C103 are joined by a disulfide. C150 and C200 are joined by a disulfide. C246 and C307 form a disulfide bridge. Residues N318, N374, N395, N511, N523, N580, N613, N619, N631, N675, N704, and N721 are each glycosylated (N-linked (GlcNAc...) asparagine). Cystine bridges form between C445–C530 and C571–C642. C688 and C737 are disulfide-bonded. Residues 765–785 (IIILVGTAVIAMFFWLLLVII) form a helical membrane-spanning segment. Residues 786 to 1356 (LRTVKRANGG…SGTTLSSPPV (571 aa)) are Cytoplasmic-facing. Y801 carries the post-translational modification Phosphotyrosine. The Protein kinase domain occupies 834 to 1162 (LKLGKPLGRG…FSELVEHLGN (329 aa)). ATP-binding positions include 840–848 (LGRGAFGQV) and K868. At Y951 the chain carries Phosphotyrosine; by autocatalysis. S982 and S984 each carry phosphoserine. Y996 is modified (phosphotyrosine; by autocatalysis). Cysteines 1024 and 1045 form a disulfide. D1028 acts as the Proton acceptor in catalysis. Phosphotyrosine; by autocatalysis occurs at positions 1054, 1059, 1175, and 1214. A phosphoserine mark is found at S1231 and S1235. A Phosphothreonine modification is found at T1238. Residues 1274–1318 (DRTKLSPSFGGMVPSKSRESVASEGSNQTSGYQSGYHSDDTDTTV) form a disordered region. Residues 1296-1309 (SEGSNQTSGYQSGY) are compositionally biased toward polar residues. 3 positions are modified to phosphotyrosine; by autocatalysis: Y1305, Y1309, and Y1319.

Belongs to the protein kinase superfamily. Tyr protein kinase family. CSF-1/PDGF receptor subfamily. As to quaternary structure, homodimer in the presence of bound dimeric VEGFA, VEGFC or VEGFD ligands; monomeric in the absence of bound ligands. Can also form heterodimers with FLT1/VEGFR1 and KDR/VEGFR2. Interacts (tyrosine phosphorylated) with LFYN, NCK1, PLCG1. Interacts (tyrosine-phosphorylated active form preferentially) with DAB2IP (via C2 domain and active form preferentially); the interaction occurs at the late phase of VEGFA response and inhibits KDR/VEGFR2 activity. Interacts with SHBSH2D2A/TSAD, GRB2, MYOF, CBL and PDCD6. Interacts (via C-terminus domain) with ERN1 (via kinase domain); the interaction is facilitated in a XBP1 isoform 1- and vascular endothelial growth factor (VEGF)-dependent manner in endothelial cells. Interacts (via juxtamembrane region) with chaperone PDCL3 (via thioredoxin fold region); the interaction leads to increased KDR/VEGFR2 abundance through inhibition of its ubiquitination and degradation. Interacts (tyrosine phosphorylated) with CCDC88A/GIV (via SH2-like region); binding requires autophosphorylation of the KDR/VEGFR2 C-terminal region. Interacts with isoform 2 of BSG. Interacts with SLC31A1; this interaction is induced upon VEGFA stimulation leading to SLC31A1 and KDR subsequent co-internalization to early endosomes, thereby activating KDR downstream signaling in endothelial cells. (Microbial infection) Interacts with HIV-1 Tat. In terms of processing, N-glycosylated. Ubiquitinated. Tyrosine phosphorylation of the receptor promotes its poly-ubiquitination, leading to its degradation via the proteasome or lysosomal proteases. Post-translationally, autophosphorylated on tyrosine residues upon ligand binding. Autophosphorylation occurs in trans, i.e. one subunit of the dimeric receptor phosphorylates tyrosine residues on the other subunit. Phosphorylation at Tyr-951 is important for interaction with SH2D2A/TSAD and VEGFA-mediated reorganization of the actin cytoskeleton. Phosphorylation at Tyr-1175 is important for interaction with PLCG1 and SHB. Phosphorylation at Tyr-1214 is important for interaction with NCK1 and FYN. Dephosphorylated by PTPRB. Dephosphorylated by PTPRJ at Tyr-951, Tyr-996, Tyr-1054, Tyr-1059, Tyr-1175 and Tyr-1214. In terms of processing, the inhibitory disulfide bond between Cys-1024 and Cys-1045 may serve as a specific molecular switch for H(2)S-induced modification that regulates KDR/VEGFR2 function. Detected in cornea (at protein level). Widely expressed.

Its subcellular location is the cell junction. The protein resides in the endoplasmic reticulum. It is found in the cell membrane. The protein localises to the cytoplasm. It localises to the nucleus. Its subcellular location is the cytoplasmic vesicle. The protein resides in the early endosome. It is found in the secreted. The enzyme catalyses L-tyrosyl-[protein] + ATP = O-phospho-L-tyrosyl-[protein] + ADP + H(+). With respect to regulation, present in an inactive conformation in the absence of bound ligand. Binding of VEGFA, VEGFC or VEGFD leads to dimerization and activation by autophosphorylation on tyrosine residues. Inhibited by the small molecule PTK inhibitor SU5614 ((3Z)-5-Chloro-3-[(3,5-dimethyl-1H-pyrrol-2-yl)methylene]-1,3-dihydro-2H-indol-2-one). May be regulated by hydrogen sulfide (H(2)S) levels via a H(2)S-sensitive intracellular disulfide bond. Tyrosine-protein kinase that acts as a cell-surface receptor for VEGFA, VEGFC and VEGFD. Plays an essential role in the regulation of angiogenesis, vascular development, vascular permeability, and embryonic hematopoiesis. Promotes proliferation, survival, migration and differentiation of endothelial cells. Promotes reorganization of the actin cytoskeleton. Isoforms lacking a transmembrane domain, such as isoform 2 and isoform 3, may function as decoy receptors for VEGFA, VEGFC and/or VEGFD. Isoform 2 plays an important role as negative regulator of VEGFA- and VEGFC-mediated lymphangiogenesis by limiting the amount of free VEGFA and/or VEGFC and preventing their binding to FLT4. Modulates FLT1 and FLT4 signaling by forming heterodimers. Binding of vascular growth factors to isoform 1 leads to the activation of several signaling cascades. Activation of PLCG1 leads to the production of the cellular signaling molecules diacylglycerol and inositol 1,4,5-trisphosphate and the activation of protein kinase C. Mediates activation of MAPK1/ERK2, MAPK3/ERK1 and the MAP kinase signaling pathway, as well as of the AKT1 signaling pathway. Mediates phosphorylation of PIK3R1, the regulatory subunit of phosphatidylinositol 3-kinase, reorganization of the actin cytoskeleton and activation of PTK2/FAK1. Required for VEGFA-mediated induction of NOS2 and NOS3, leading to the production of the signaling molecule nitric oxide (NO) by endothelial cells. Phosphorylates PLCG1. Promotes phosphorylation of FYN, NCK1, NOS3, PIK3R1, PTK2/FAK1 and SRC. The polypeptide is Vascular endothelial growth factor receptor 2 (Homo sapiens (Human)).